Reading from the N-terminus, the 364-residue chain is Carbamoyl phosphate synthase small chain (364 aa).

2 CPSase regions span residues Met1–Gly167 and Met1–Arg171. The L-glutamine site is built by Ser45, Gly219, and Gly221. In terms of domain architecture, Glutamine amidotransferase type-1 spans Arg171–Lys358. Cys246 acts as the Nucleophile in catalysis. Residues Leu247, Gln250, Asn288, Gly290, and Tyr291 each contribute to the L-glutamine site. Active-site residues include His331 and Glu333.

Belongs to the CarA family. Composed of two chains; the small (or glutamine) chain promotes the hydrolysis of glutamine to ammonia, which is used by the large (or ammonia) chain to synthesize carbamoyl phosphate. Tetramer of heterodimers (alpha,beta)4.

It catalyses the reaction hydrogencarbonate + L-glutamine + 2 ATP + H2O = carbamoyl phosphate + L-glutamate + 2 ADP + phosphate + 2 H(+). The catalysed reaction is L-glutamine + H2O = L-glutamate + NH4(+). Its pathway is amino-acid biosynthesis; L-arginine biosynthesis; carbamoyl phosphate from bicarbonate: step 1/1. It participates in pyrimidine metabolism; UMP biosynthesis via de novo pathway; (S)-dihydroorotate from bicarbonate: step 1/3. In terms of biological role, small subunit of the glutamine-dependent carbamoyl phosphate synthetase (CPSase). CPSase catalyzes the formation of carbamoyl phosphate from the ammonia moiety of glutamine, carbonate, and phosphate donated by ATP, constituting the first step of 2 biosynthetic pathways, one leading to arginine and/or urea and the other to pyrimidine nucleotides. The small subunit (glutamine amidotransferase) binds and cleaves glutamine to supply the large subunit with the substrate ammonia. The polypeptide is Carbamoyl phosphate synthase small chain (Bacillus caldolyticus).